Reading from the N-terminus, the 140-residue chain is NADPH-dependent 7-cyano-7-deazaguanine reductase (140 aa).

The active-site Thioimide intermediate is the Cys49. Catalysis depends on Asp56, which acts as the Proton donor. Residues 71 to 73 (IEL) and 90 to 91 (HE) contribute to the substrate site.

Belongs to the GTP cyclohydrolase I family. QueF type 1 subfamily.

The protein resides in the cytoplasm. The enzyme catalyses 7-aminomethyl-7-carbaguanine + 2 NADP(+) = 7-cyano-7-deazaguanine + 2 NADPH + 3 H(+). Its pathway is tRNA modification; tRNA-queuosine biosynthesis. Its function is as follows. Catalyzes the NADPH-dependent reduction of 7-cyano-7-deazaguanine (preQ0) to 7-aminomethyl-7-deazaguanine (preQ1). The sequence is that of NADPH-dependent 7-cyano-7-deazaguanine reductase from Prochlorococcus marinus (strain NATL2A).